A 208-amino-acid chain; its full sequence is Small ribosomal subunit protein uS4 (208 aa).

The region spanning 98 to 178 is the S4 RNA-binding domain; it reads SRLDNVVYRM…RPKWLEYDAE (81 aa).

The protein belongs to the universal ribosomal protein uS4 family. As to quaternary structure, part of the 30S ribosomal subunit. Contacts protein S5. The interaction surface between S4 and S5 is involved in control of translational fidelity.

Functionally, one of the primary rRNA binding proteins, it binds directly to 16S rRNA where it nucleates assembly of the body of the 30S subunit. With S5 and S12 plays an important role in translational accuracy. In Acetivibrio thermocellus (strain ATCC 27405 / DSM 1237 / JCM 9322 / NBRC 103400 / NCIMB 10682 / NRRL B-4536 / VPI 7372) (Clostridium thermocellum), this protein is Small ribosomal subunit protein uS4.